The sequence spans 127 residues: Large ribosomal subunit protein bL17 (127 aa).

This sequence belongs to the bacterial ribosomal protein bL17 family. In terms of assembly, part of the 50S ribosomal subunit. Contacts protein L32.

The chain is Large ribosomal subunit protein bL17 from Limosilactobacillus reuteri (strain DSM 20016) (Lactobacillus reuteri).